Here is a 78-residue protein sequence, read N- to C-terminus: Translation initiation factor IF-1, chloroplastic (78 aa).

An S1-like domain is found at 1 to 72 (MKKQNLIEME…TKGRITYRLR (72 aa)).

This sequence belongs to the IF-1 family. Component of the 30S ribosomal translation pre-initiation complex which assembles on the 30S ribosome in the order IF-2 and IF-3, IF-1 and N-formylmethionyl-tRNA(fMet); mRNA recruitment can occur at any time during PIC assembly.

The protein resides in the plastid. The protein localises to the chloroplast. Its function is as follows. One of the essential components for the initiation of protein synthesis. Stabilizes the binding of IF-2 and IF-3 on the 30S subunit to which N-formylmethionyl-tRNA(fMet) subsequently binds. Helps modulate mRNA selection, yielding the 30S pre-initiation complex (PIC). Upon addition of the 50S ribosomal subunit IF-1, IF-2 and IF-3 are released leaving the mature 70S translation initiation complex. The chain is Translation initiation factor IF-1, chloroplastic from Chaetosphaeridium globosum (Charophycean green alga).